The following is a 242-amino-acid chain: Venom redulysin 2 (242 aa).

A signal peptide spans M1–G19. The propeptide occupies F20–R46.

Belongs to the redulysin-like family. Contains 5 disulfide bonds. In terms of tissue distribution, expressed by the venom gland (posterior main gland) (at protein level).

It is found in the secreted. In terms of biological role, highly abundant protein that may be responsible for the observed disruption of sensory neuron membranes, since it is homologous to proteins such as trialysin, which forms pores in lipid bilayers. Probable insecticidal toxin. The polypeptide is Venom redulysin 2 (Platymeris rhadamanthus (Red spot assassin bug)).